The primary structure comprises 362 residues: Sulfate/thiosulfate import ATP-binding protein CysA (362 aa).

The ABC transporter domain occupies 3–237 (IEIHDLSKQF…PANPFVYEFL (235 aa)). 35-42 (GPSGSGKT) contacts ATP.

It belongs to the ABC transporter superfamily. Sulfate/tungstate importer (TC 3.A.1.6) family. The complex is composed of two ATP-binding proteins (CysA), two transmembrane proteins (CysT and CysW) and a solute-binding protein (CysP).

It localises to the cell inner membrane. It carries out the reaction sulfate(out) + ATP + H2O = sulfate(in) + ADP + phosphate + H(+). The enzyme catalyses thiosulfate(out) + ATP + H2O = thiosulfate(in) + ADP + phosphate + H(+). Functionally, part of the ABC transporter complex CysAWTP involved in sulfate/thiosulfate import. Responsible for energy coupling to the transport system. The polypeptide is Sulfate/thiosulfate import ATP-binding protein CysA (Nitrosomonas europaea (strain ATCC 19718 / CIP 103999 / KCTC 2705 / NBRC 14298)).